The following is a 119-amino-acid chain: Large ribosomal subunit protein uL24 (119 aa).

Belongs to the universal ribosomal protein uL24 family. As to quaternary structure, part of the 50S ribosomal subunit.

One of two assembly initiator proteins, it binds directly to the 5'-end of the 23S rRNA, where it nucleates assembly of the 50S subunit. Its function is as follows. One of the proteins that surrounds the polypeptide exit tunnel on the outside of the subunit. The chain is Large ribosomal subunit protein uL24 from Arthrobacter sp. (strain FB24).